Here is a 269-residue protein sequence, read N- to C-terminus: WIMGHMVNDLKLADEFLNDGANSLELDVEFSSSGTAQRTHHGIPCDCFRYCTNSEKFSTYLDYIRQLTTPGNSKFRSRLILLVMDLKLNPLSNRAAYYAGAGVALNLLNHYWQRGESEARAYIVLSLSTIGRADFISGFKNTMEKEGFADKYYDKIGWDFSGNENLQLIRNIFKIYGIREHIWQGDGITNCLPRGDSRLKEALNLRYSPSYVYADKVYTWSIDKESSIENALRLGVDGVMTNHPERLIEVLGKGKYSDKFRLATYDDNP.

Residue His5 is part of the active site. Positions 25 and 27 each coordinate Mg(2+). His41 serves as the catalytic Nucleophile. Intrachain disulfides connect Cys45-Cys51 and Cys47-Cys191. Asp85 provides a ligand contact to Mg(2+).

This sequence belongs to the arthropod phospholipase D family. Class II subfamily. Requires Mg(2+) as cofactor. Expressed by the venom gland.

The protein resides in the secreted. It carries out the reaction an N-(acyl)-sphingosylphosphocholine = an N-(acyl)-sphingosyl-1,3-cyclic phosphate + choline. It catalyses the reaction an N-(acyl)-sphingosylphosphoethanolamine = an N-(acyl)-sphingosyl-1,3-cyclic phosphate + ethanolamine. The catalysed reaction is a 1-acyl-sn-glycero-3-phosphocholine = a 1-acyl-sn-glycero-2,3-cyclic phosphate + choline. The enzyme catalyses a 1-acyl-sn-glycero-3-phosphoethanolamine = a 1-acyl-sn-glycero-2,3-cyclic phosphate + ethanolamine. Functionally, dermonecrotic toxins cleave the phosphodiester linkage between the phosphate and headgroup of certain phospholipids (sphingolipid and lysolipid substrates), forming an alcohol (often choline) and a cyclic phosphate. This toxin acts on sphingomyelin (SM). It may also act on ceramide phosphoethanolamine (CPE), lysophosphatidylcholine (LPC) and lysophosphatidylethanolamine (LPE), but not on lysophosphatidylserine (LPS), and lysophosphatidylglycerol (LPG). It acts by transphosphatidylation, releasing exclusively cyclic phosphate products as second products. Induces dermonecrosis, hemolysis, increased vascular permeability, edema, inflammatory response, and platelet aggregation. This Sicarius peruensis (Six-eyed sand spider) protein is Dermonecrotic toxin SpeSicTox-betaIB3.